The sequence spans 112 residues: ATP synthase epsilon chain (112 aa).

The protein belongs to the ATPase epsilon chain family. As to quaternary structure, F-type ATPases have 2 components, CF(1) - the catalytic core - and CF(0) - the membrane proton channel. CF(1) has five subunits: alpha(3), beta(3), gamma(1), delta(1), epsilon(1). CF(0) has three main subunits: a, b and c.

It localises to the cell inner membrane. Its function is as follows. Produces ATP from ADP in the presence of a proton gradient across the membrane. This is ATP synthase epsilon chain from Rickettsia felis (strain ATCC VR-1525 / URRWXCal2) (Rickettsia azadi).